A 32-amino-acid chain; its full sequence is Zinc metalloproteinase carinactivase-1 catalytic subunit (32 aa).

The 23-residue stretch at 10-32 (FIKLVIVVDHSMVXKXNNDLIAI) folds into the Peptidase M12B domain.

Belongs to the venom metalloproteinase (M12B) family. P-III subfamily. P-IIId sub-subfamily. Heterodimer of a metalloproteinase subunit and a regulatory subunit comprising two disulfide-linked lectins (14 kDa and 17 kDa chains) (AC Q9PRP7 and AC Q9PRP8). The cofactor is Zn(2+). Expressed by the venom gland.

The protein localises to the secreted. Functionally, calcium-dependent prothrombin (F2) activator. This protein may activate prothrombin via recognition by the regulatory subunit of the calcium ion bound conformation of its gamma-carboxyglutamic acid (GLA) domain, and the subsequent conversion of prothrombin to active thrombin is catalyzed by the catalytic subunit. The protein is Zinc metalloproteinase carinactivase-1 catalytic subunit of Echis carinatus (Saw-scaled viper).